We begin with the raw amino-acid sequence, 123 residues long: MIQEQTMLNVADNSGARRVMCIKVLGGSHRRYAGVGDIIKITIKEAIPRGKVKKGDVLKAVVVRTKKGVRRPDGSVIRFDGNACVILNNNSEQPIGTRIFGPVTRELRTEKFMKIISLAPEVL.

It belongs to the universal ribosomal protein uL14 family. As to quaternary structure, part of the 50S ribosomal subunit. Forms a cluster with proteins L3 and L19. In the 70S ribosome, L14 and L19 interact and together make contacts with the 16S rRNA in bridges B5 and B8.

Functionally, binds to 23S rRNA. Forms part of two intersubunit bridges in the 70S ribosome. The protein is Large ribosomal subunit protein uL14 of Citrobacter koseri (strain ATCC BAA-895 / CDC 4225-83 / SGSC4696).